A 420-amino-acid chain; its full sequence is Mannose-1-phosphate guanylyltransferase regulatory subunit alpha (420 aa).

The tract at residues 2 to 251 (LKAVILIGGP…DGIWSQIKSA (250 aa)) is substrate-binding domain. GDP-alpha-D-mannose is bound by residues E85 and Q247. The hexapeptide repeat domain stretch occupies residues 273–420 (LAKHTPGGPR…SRSFTNQIIL (148 aa)). A C-loop region spans residues 356-384 (TPNDPNPNDPRAHMDSESLFKDGKLLPAI).

This sequence belongs to the transferase hexapeptide repeat family. Component of the GMPPA-GMPPB mannose-1-phosphate guanylyltransferase complex composed of 4 GMPPA subunits and 8 GMPPB subunits; the complex is organized into three layers, a central layer made up of 2 GMPPA dimers sandwiched between two layers each made up of 2 GMPPB dimers. Expressed in the liver (at protein level).

The protein resides in the cytoplasm. Functionally, regulatory subunit of the GMPPA-GMPPB mannose-1-phosphate guanylyltransferase complex; reduces the catalytic activity of GMPPB when part of the complex. Mediates allosteric feedback inhibition of GMPPB catalytic activity upon binding GDP-alpha-D-mannose. Together with GMPPB regulates GDP-alpha-D-mannose levels. In Sus scrofa (Pig), this protein is Mannose-1-phosphate guanylyltransferase regulatory subunit alpha (GMPPA).